The following is a 156-amino-acid chain: MATKIRLKRMGKKFYAVYRVVVMDSRTKRDGRAIEEIGLYNPNTQPSTIEIKSDRAQYWLGVGAQPTDQVLNLLKITGDWQKFKGLKGAEGTLKTAAAKPEAAVLVEEAENKAQKLKAAKAEAAAKAAEAETPAEVQHDDEKVELADVEESAPESV.

The segment covering 124 to 135 (AAKAAEAETPAE) has biased composition (low complexity). The segment at 124 to 156 (AAKAAEAETPAEVQHDDEKVELADVEESAPESV) is disordered. Positions 136-145 (VQHDDEKVEL) are enriched in basic and acidic residues. A compositionally biased stretch (acidic residues) spans 146–156 (ADVEESAPESV).

Belongs to the bacterial ribosomal protein bS16 family.

In Bifidobacterium animalis subsp. lactis (strain AD011), this protein is Small ribosomal subunit protein bS16.